A 272-amino-acid chain; its full sequence is 4-hydroxy-tetrahydrodipicolinate reductase (272 aa).

NAD(+)-binding positions include 12-17 (GAAGRM) and Glu38. Arg39 contacts NADP(+). NAD(+) contacts are provided by residues 102–104 (GTT) and 126–129 (SGNM). Residue His160 is the Proton donor/acceptor of the active site. His161 is a (S)-2,3,4,5-tetrahydrodipicolinate binding site. Residue Lys164 is the Proton donor of the active site. Residue 170 to 171 (GT) coordinates (S)-2,3,4,5-tetrahydrodipicolinate.

This sequence belongs to the DapB family.

It localises to the cytoplasm. The catalysed reaction is (S)-2,3,4,5-tetrahydrodipicolinate + NAD(+) + H2O = (2S,4S)-4-hydroxy-2,3,4,5-tetrahydrodipicolinate + NADH + H(+). It carries out the reaction (S)-2,3,4,5-tetrahydrodipicolinate + NADP(+) + H2O = (2S,4S)-4-hydroxy-2,3,4,5-tetrahydrodipicolinate + NADPH + H(+). It functions in the pathway amino-acid biosynthesis; L-lysine biosynthesis via DAP pathway; (S)-tetrahydrodipicolinate from L-aspartate: step 4/4. Its function is as follows. Catalyzes the conversion of 4-hydroxy-tetrahydrodipicolinate (HTPA) to tetrahydrodipicolinate. The chain is 4-hydroxy-tetrahydrodipicolinate reductase from Rhizobium meliloti (strain 1021) (Ensifer meliloti).